Reading from the N-terminus, the 332-residue chain is MLQAIGWPWPGPPADSAWQAMCAMYSQCRPARVIEQHRSGYVVAEAPEVPIKVESLPAWQRRSFPPHERAVVGDWVLLDGRRIVALLPRRTVIKRLAAGEHYRQQLIAANLDTAFIVCGLDGDFNPRRIERYCVLIASGGVEPVVVLTKVDLCVDVAAAVAVLREHSSQALAVVAVDARKAEPVVALYPWLLPGRTVALLGSSGAGKSTLTNTLLGEQRMKVGEVRQRDSRGRHTTTHRALLPLPSGACLIDTPGMRELKFTGEEDLVEEFADIELLATQCRFRDCAHQAEPGCAVRAAIGCGTLDPQRLHHYFKLRGEIVGAADRSMLRRY.

The region spanning 103 to 259 (RQQLIAANLD…LIDTPGMREL (157 aa)) is the CP-type G domain. GTP is bound by residues 148–151 (TKVD) and 201–209 (GSSGAGKST). Zn(2+)-binding residues include cysteine 281, cysteine 286, histidine 288, and cysteine 294.

The protein belongs to the TRAFAC class YlqF/YawG GTPase family. RsgA subfamily. Monomer. Associates with 30S ribosomal subunit, binds 16S rRNA. The cofactor is Zn(2+).

The protein resides in the cytoplasm. In terms of biological role, one of several proteins that assist in the late maturation steps of the functional core of the 30S ribosomal subunit. Helps release RbfA from mature subunits. May play a role in the assembly of ribosomal proteins into the subunit. Circularly permuted GTPase that catalyzes slow GTP hydrolysis, GTPase activity is stimulated by the 30S ribosomal subunit. The protein is Small ribosomal subunit biogenesis GTPase RsgA of Xylella fastidiosa (strain M23).